The primary structure comprises 371 residues: Polar tube protein 1 (371 aa).

Positions methionine 1–serine 22 are cleaved as a signal peptide. Low complexity-rich tracts occupy residues proline 65–glutamate 94 and threonine 255–glutamine 270. 2 disordered regions span residues proline 65–aspartate 95 and glutamine 229–glutamine 270.

Glycosylated.

The protein resides in the spore polar tube. Involved with PTP2 and PTP3 in formation of a polar tube through which the infectious agent is passed on to the host cell. The protein is Polar tube protein 1 (PTP1) of Encephalitozoon intestinalis (Microsporidian parasite).